The sequence spans 201 residues: Holliday junction branch migration complex subunit RuvA (201 aa).

The tract at residues 1–64 (MIGRLRGELV…EDAHVLYGFA (64 aa)) is domain I. The domain II stretch occupies residues 65-143 (SESERALFRS…SLPAAVTLTG (79 aa)). The flexible linker stretch occupies residues 144–153 (GKPAAAAARA). A domain III region spans residues 153 to 201 (APDPVSDAVSALVSLGYKPQEASRLISAVEGEAERSEDLIRLALKATLK).

The protein belongs to the RuvA family. In terms of assembly, homotetramer. Forms an RuvA(8)-RuvB(12)-Holliday junction (HJ) complex. HJ DNA is sandwiched between 2 RuvA tetramers; dsDNA enters through RuvA and exits via RuvB. An RuvB hexamer assembles on each DNA strand where it exits the tetramer. Each RuvB hexamer is contacted by two RuvA subunits (via domain III) on 2 adjacent RuvB subunits; this complex drives branch migration. In the full resolvosome a probable DNA-RuvA(4)-RuvB(12)-RuvC(2) complex forms which resolves the HJ.

It is found in the cytoplasm. Functionally, the RuvA-RuvB-RuvC complex processes Holliday junction (HJ) DNA during genetic recombination and DNA repair, while the RuvA-RuvB complex plays an important role in the rescue of blocked DNA replication forks via replication fork reversal (RFR). RuvA specifically binds to HJ cruciform DNA, conferring on it an open structure. The RuvB hexamer acts as an ATP-dependent pump, pulling dsDNA into and through the RuvAB complex. HJ branch migration allows RuvC to scan DNA until it finds its consensus sequence, where it cleaves and resolves the cruciform DNA. This chain is Holliday junction branch migration complex subunit RuvA, found in Thioalkalivibrio sulfidiphilus (strain HL-EbGR7).